The primary structure comprises 554 residues: Hydroxylamine reductase (554 aa).

Positions 3, 6, 18, and 25 each coordinate [2Fe-2S] cluster. His-252, Glu-276, Cys-320, Cys-408, Cys-436, Cys-461, Glu-495, and Lys-497 together coordinate hybrid [4Fe-2O-2S] cluster. At Cys-408 the chain carries Cysteine persulfide.

The protein belongs to the HCP family. [2Fe-2S] cluster is required as a cofactor. The cofactor is hybrid [4Fe-2O-2S] cluster.

It is found in the cytoplasm. It carries out the reaction A + NH4(+) + H2O = hydroxylamine + AH2 + H(+). Functionally, catalyzes the reduction of hydroxylamine to form NH(3) and H(2)O. In Shewanella baltica (strain OS155 / ATCC BAA-1091), this protein is Hydroxylamine reductase.